We begin with the raw amino-acid sequence, 376 residues long: 3-dehydroquinate synthase (376 aa).

Residues 115–119 (GVIGD), 139–140 (TS), lysine 152, and lysine 161 contribute to the NAD(+) site. 3 residues coordinate Zn(2+): glutamate 194, histidine 256, and histidine 275.

Belongs to the sugar phosphate cyclases superfamily. Dehydroquinate synthase family. Requires Co(2+) as cofactor. Zn(2+) serves as cofactor. The cofactor is NAD(+).

The protein resides in the cytoplasm. It carries out the reaction 7-phospho-2-dehydro-3-deoxy-D-arabino-heptonate = 3-dehydroquinate + phosphate. It participates in metabolic intermediate biosynthesis; chorismate biosynthesis; chorismate from D-erythrose 4-phosphate and phosphoenolpyruvate: step 2/7. In terms of biological role, catalyzes the conversion of 3-deoxy-D-arabino-heptulosonate 7-phosphate (DAHP) to dehydroquinate (DHQ). The protein is 3-dehydroquinate synthase of Rhizobium etli (strain CIAT 652).